Here is a 335-residue protein sequence, read N- to C-terminus: Protein PXR1 (335 aa).

In terms of domain architecture, G-patch spans 25–71; the sequence is KSRFGHKYLEKLGWEPGKGLGHASHAMSTHIKVTIKDDTMGLGAKLK. The tract at residues 155–310 is disordered; that stretch reads DDAEDAKVSG…PPTISTRLSV (156 aa). Residues 163–175 show a composition bias toward basic residues; the sequence is SGKHRDRKSRAKR. Positions 183-209 are enriched in basic and acidic residues; sequence LKEKCRDIDRTRKSKRKEKEQEKEKNR. Over residues 226–257 the composition is skewed to basic residues; that stretch reads KKDKKDKKEKKEKKEKKEKKEKKHKEKSNKRL.

The protein belongs to the PINX1 family.

It is found in the nucleus. It localises to the nucleolus. Its function is as follows. Involved in rRNA-processing at A0, A1 and A2 sites and negatively regulates telomerase. In Eremothecium gossypii (strain ATCC 10895 / CBS 109.51 / FGSC 9923 / NRRL Y-1056) (Yeast), this protein is Protein PXR1 (PXR1).